The sequence spans 263 residues: L-erythrulose-1-phosphate isomerase (263 aa).

Histidine 106 acts as the Electrophile in catalysis. Glutamate 178 serves as the catalytic Proton acceptor.

This sequence belongs to the triosephosphate isomerase family.

The enzyme catalyses L-erythrulose 1-phosphate = D-erythrulose 4-phosphate. The protein operates within carbohydrate metabolism; L-threitol degradation. Its function is as follows. Catalyzes the isomerization of L-erythrulose-1P to D-erythrulose-4P. Involved in the degradation pathway of L-threitol, that allows M.smegmatis to grow on this compound as the sole carbon source. This is L-erythrulose-1-phosphate isomerase from Mycolicibacterium smegmatis (strain ATCC 700084 / mc(2)155) (Mycobacterium smegmatis).